Here is a 128-residue protein sequence, read N- to C-terminus: V-type proton ATPase subunit F (128 aa).

Belongs to the V-ATPase F subunit family. V-ATPase is a heteromultimeric enzyme composed of a peripheral catalytic V1 complex (components A to H) attached to an integral membrane V0 proton pore complex (components: a, c, c'', d and e).

It localises to the vacuole membrane. In terms of biological role, subunit of the peripheral V1 complex of vacuolar ATPase essential for assembly or catalytic function. V-ATPase is responsible for acidifying a variety of intracellular compartments in eukaryotic cells. The sequence is that of V-type proton ATPase subunit F (VHA-F) from Arabidopsis thaliana (Mouse-ear cress).